The primary structure comprises 392 residues: G2/mitotic-specific cyclin-B (392 aa).

The protein belongs to the cyclin family. Cyclin AB subfamily.

Essential for the control of the cell cycle at the G2/M (mitosis) transition. Interacts with the CDC2 protein kinase to form MPF. G2/M cyclins accumulate steadily during G2 and are abruptly destroyed at mitosis. The protein is G2/mitotic-specific cyclin-B of Hydra viridissima (Green hydra).